A 417-amino-acid polypeptide reads, in one-letter code: Serine hydroxymethyltransferase (417 aa).

(6S)-5,6,7,8-tetrahydrofolate is bound by residues Leu121 and 125-127 (GHL). Residue Lys229 is modified to N6-(pyridoxal phosphate)lysine. 355–357 (SPF) lines the (6S)-5,6,7,8-tetrahydrofolate pocket.

This sequence belongs to the SHMT family. As to quaternary structure, homodimer. Requires pyridoxal 5'-phosphate as cofactor.

It is found in the cytoplasm. The catalysed reaction is (6R)-5,10-methylene-5,6,7,8-tetrahydrofolate + glycine + H2O = (6S)-5,6,7,8-tetrahydrofolate + L-serine. The protein operates within one-carbon metabolism; tetrahydrofolate interconversion. It functions in the pathway amino-acid biosynthesis; glycine biosynthesis; glycine from L-serine: step 1/1. Catalyzes the reversible interconversion of serine and glycine with tetrahydrofolate (THF) serving as the one-carbon carrier. This reaction serves as the major source of one-carbon groups required for the biosynthesis of purines, thymidylate, methionine, and other important biomolecules. Also exhibits THF-independent aldolase activity toward beta-hydroxyamino acids, producing glycine and aldehydes, via a retro-aldol mechanism. This chain is Serine hydroxymethyltransferase, found in Tolumonas auensis (strain DSM 9187 / NBRC 110442 / TA 4).